A 1209-amino-acid polypeptide reads, in one-letter code: Sterol 3-beta-glucosyltransferase (1209 aa).

One can recognise a GRAM 1 domain in the interval 167 to 217; sequence ERLIKKFLPNDDEKYIEEYPCWLLRDIMIQGHAYLTNKHLFFFAFIPNFES. One can recognise a PH domain in the interval 218-315; it reads DFNVTGSLRL…WVSSIKKQMF (98 aa). A GRAM 2 domain is found at 568 to 634; it reads VRFRQHFSFD…EDVENCYKET (67 aa). 12 residues coordinate UDP-alpha-D-glucose: serine 745, arginine 746, aspartate 748, asparagine 1019, valine 1048, histidine 1050, histidine 1063, serine 1066, glycine 1067, threonine 1068, aspartate 1087, and glutamine 1088. Positions 1186–1209 are disordered; it reads AKGNEKEEYSSEGSGSNDGSWLLI. The segment covering 1196 to 1209 has biased composition (low complexity); sequence SEGSGSNDGSWLLI.

The protein belongs to the glycosyltransferase 28 family.

It is found in the cytoplasm. The protein resides in the membrane. The catalysed reaction is a sterol + UDP-alpha-D-glucose = a sterol 3-beta-D-glucoside + UDP + H(+). It carries out the reaction ergosterol + UDP-alpha-D-glucose = ergosteryl 3-beta-D-glucoside + UDP + H(+). Its function is as follows. Sterol glycosyltransferase responsible for the glycosylation of ergosterol to form ergosterol-glucoside. This Kluyveromyces lactis (strain ATCC 8585 / CBS 2359 / DSM 70799 / NBRC 1267 / NRRL Y-1140 / WM37) (Yeast) protein is Sterol 3-beta-glucosyltransferase.